Here is a 355-residue protein sequence, read N- to C-terminus: Galectin-9 (355 aa).

Galectin domains follow at residues 17-148 and 227-355; these read FTGM…ISFQ and FFTS…HVQT. A beta-D-galactoside-binding positions include Asn-48, His-61, Arg-65, Asn-75, 82–88, His-267, Arg-271, Thr-281, and 287–293; these read WGTEERK and WGSEERS.

Its subcellular location is the cytoplasm. The protein localises to the nucleus. The protein resides in the secreted. Binds galactosides. Has high affinity for the Forssman pentasaccharide. Ligand for HAVCR2/TIM3. Binding to HAVCR2 induces T-helper type 1 lymphocyte (Th1) death. Also stimulates bactericidal activity in infected macrophages by causing macrophage activation and IL1B secretion which restricts intracellular bacterial growth. Ligand for P4HB; the interaction retains P4HB at the cell surface of Th2 T helper cells, increasing disulfide reductase activity at the plasma membrane, altering the plasma membrane redox state and enhancing cell migration. Ligand for CD44; the interaction enhances binding of SMAD3 to the FOXP3 promoter, leading to up-regulation of FOXP3 expression and increased induced regulatory T (iTreg) cell stability and suppressive function. Promotes ability of mesenchymal stromal cells to suppress T-cell proliferation. Expands regulatory T-cells and induces cytotoxic T-cell apoptosis following virus infection. Activates ERK1/2 phosphorylation inducing cytokine (IL-6, IL-8, IL-12) and chemokine (CCL2) production in mast and dendritic cells. Inhibits degranulation and induces apoptosis of mast cells. Induces maturation and migration of dendritic cells. Inhibits natural killer (NK) cell function. Can transform NK cell phenotype from peripheral to decidual during pregnancy. Astrocyte derived galectin-9 enhances microglial TNF production. May play a role in thymocyte-epithelial interactions relevant to the biology of the thymus. May provide the molecular basis for urate flux across cell membranes, allowing urate that is formed during purine metabolism to efflux from cells and serving as an electrogenic transporter that plays an important role in renal and gastrointestinal urate excretion. Highly selective to the anion urate. The sequence is that of Galectin-9 (LGALS9) from Bos taurus (Bovine).